The primary structure comprises 591 residues: Transcription factor COE1 (591 aa).

Methionine 1 is modified (N-acetylmethionine). A compositionally biased stretch (polar residues) spans 1–14 (MFGIQESIQRSGSS). The interval 1–21 (MFGIQESIQRSGSSMKEEPLG) is disordered. A Glycyl lysine isopeptide (Lys-Gly) (interchain with G-Cter in SUMO1); alternate cross-link involves residue lysine 16. A Glycyl lysine isopeptide (Lys-Gly) (interchain with G-Cter in SUMO2); alternate cross-link involves residue lysine 16. The interval 63–66 (RKSN) is interaction with DNA. The segment at 151 to 170 (CRVLLTHEIMCSRCCDKKSC) adopts a C5-type zinc-finger fold. 2 interaction with DNA regions span residues 197 to 204 (NCLKNAGN) and 236 to 239 (NNSK). Positions 262-345 (PCIKAISPSE…KGTPGRFIYT (84 aa)) constitute an IPT/TIG domain. Residues 457 to 480 (GFTRNSSSVSPHGYVPSTTPQQTN) are disordered.

It belongs to the COE family. Homodimer. Interacts with ZNF423 and ZNF521, leading to prevent EBF1 to bind DNA and activate target genes. Interacts with CCR4-NOT component CNOT3. As to quaternary structure, (Microbial infection) Interacts with Epstein-barr virus protein EBNA2.

The protein localises to the nucleus. Key pioneer transcription factor of B-cell specification and commitment. Recognizes variations of the palindromic sequence 5'-ATTCCCNNGGGAATT-3'. Operates in a transcription factor network to activate B-cell-specific genes and repress genes associated with alternative cell fates. For instance, positively regulates many B-cell specific genes including BCR or CD40 while repressing genes that direct cells into alternative lineages, including GATA3 and TCF7 for the T-cell lineage. In addition to its role during lymphopoiesis, controls the thermogenic gene program in adipocytes during development and in response to environmental cold. In terms of biological role, (Microbial infection) Acts as a chromatin anchor for Epstein-Barr virus EBNA2 to mediate the assembly of EBNA2 chromatin complexes in B-cells. In addition, binds to the viral LMP1 proximal promoter and promotes its expression during latency. This Homo sapiens (Human) protein is Transcription factor COE1 (EBF1).